We begin with the raw amino-acid sequence, 86 residues long: Putative membrane protein insertion efficiency factor (86 aa).

This sequence belongs to the UPF0161 family.

Its subcellular location is the cell membrane. Could be involved in insertion of integral membrane proteins into the membrane. This is Putative membrane protein insertion efficiency factor from Streptococcus pyogenes serotype M1.